A 408-amino-acid polypeptide reads, in one-letter code: Homogentisate geranylgeranyltransferase (408 aa).

A chloroplast-targeting transit peptide spans 1-62 (MQAVTAAAAA…TVMHKFSAIS (62 aa)). 9 helical membrane-spanning segments follow: residues 122–142 (HTIF…MKSI), 156–176 (ALTA…LYDI), 194–214 (SVAT…SIGI), 221–241 (LMCA…EAPF), 248–268 (ALLA…LAFF), 286–306 (LVFA…FKDI), 329–349 (VYQL…LVGA), 352–372 (TNLF…LTLW), and 386–406 (VTSF…LIPF).

This sequence belongs to the UbiA prenyltransferase family. As to expression, expressed in seeds.

The protein resides in the plastid. The protein localises to the chloroplast membrane. It carries out the reaction homogentisate + (2E,6E,10E)-geranylgeranyl diphosphate + H(+) = 6-geranylgeranyl-2-methylbenzene-1,4-diol + CO2 + diphosphate. It participates in cofactor biosynthesis; tocopherol biosynthesis. Functionally, involved in the synthesis of tocotrienol (vitamin E). Catalyzes the condensation of homogentisate and geranylgeranyl diphosphate to form 2-methyl-6-geranylgeranylbenzoquinol. Possesses low activity with phytyl diphosphate as substrate. The sequence is that of Homogentisate geranylgeranyltransferase from Hordeum vulgare (Barley).